Reading from the N-terminus, the 191-residue chain is Large ribosomal subunit protein uL3 (191 aa).

Residues 119–138 (AAHGSRFHRRPGSIGNREWP) form a disordered region.

The protein belongs to the universal ribosomal protein uL3 family. As to quaternary structure, part of the 50S ribosomal subunit. Forms a cluster with proteins L14 and L19.

Its function is as follows. One of the primary rRNA binding proteins, it binds directly near the 3'-end of the 23S rRNA, where it nucleates assembly of the 50S subunit. This is Large ribosomal subunit protein uL3 (rplC) from Helicobacter pylori (strain ATCC 700392 / 26695) (Campylobacter pylori).